Here is a 476-residue protein sequence, read N- to C-terminus: Acyl-lipid omega-13 desaturase (476 aa).

The Cytochrome b5 heme-binding domain occupies 10-75 (GPALPSIPHQ…HLRVLERFRV (66 aa)). Heme-binding residues include histidine 37 and histidine 60. The next 2 membrane-spanning stretches (helical) occupy residues 146–166 (PFVI…KLWW) and 168–188 (GAFI…AAMV). Positions 189–193 (HDGGH) match the Histidine box-1 motif. The short motif at 224–229 (HNILHH) is the Histidine box-2 element. Helical transmembrane passes span 267 to 287 (FFSH…ISPL), 315 to 335 (YHST…TPFL), and 343 to 363 (LLLT…IAQV). The Histidine box-3 motif lies at 410–414 (QSLHH).

The protein belongs to the fatty acid desaturase type 1 family.

Its subcellular location is the membrane. The catalysed reaction is a (9Z,12Z)-octadecadienoyl-containing glycerolipid + 2 Fe(II)-[cytochrome b5] + O2 + 2 H(+) = a (5Z,9Z,12Z)-octadecatrienoyl-containing glycerolipid + 2 Fe(III)-[cytochrome b5] + 2 H2O. It carries out the reaction (9Z,12Z,15Z)-octadecatrienoyl-containing glycerolipid + 2 Fe(II)-[cytochrome b5] + O2 + 2 H(+) = a (5Z,9Z,12Z,15Z)-octadecatetraenoyl-containing glycerolipid + 2 Fe(III)-[cytochrome b5] + 2 H2O. It functions in the pathway lipid metabolism; polyunsaturated fatty acid biosynthesis. Its function is as follows. Front-end desaturase having a omega-13 desaturase activity for omega-9 unsaturated C18/C20 fatty acids. Strong substrate preferences for linoleic acid and alpha-linolenic acid for the production of pinolenic and coniferonic acids respectively. No desaturase activity for dihomo gamma-linolenic acid and eicosatertraenoic acid. The polypeptide is Acyl-lipid omega-13 desaturase (Chlamydomonas reinhardtii (Chlamydomonas smithii)).